An 881-amino-acid chain; its full sequence is MGCLKNQLLIAILLLSVYGIYCTQYVTVFYGVPAWRNATIPLFCATKNRDTWGTTQCLPDNGDYSELALNVTESFDAWENTVTEQAIEDVWQLFETSIKPCVKLSPLCITMRCNKSETDRWGLTKSSTTITTAAPTSAPVSEKLDMVNETSSCIAQNNCTGLEQEQMISCKFNMTGLKRDKTKEYNETWYSTDLVCEQRNSTDNESRCYMNHCNTSVIQESCDKHYWDTIRFRYCAPPGYALLRCNDTNYSGFMPKCSKVVVSSCTRMMETQTSTWFGFNGTRAENRTYIYWHGRDNRTIISLNKYYNLTMKCRRPGNKTVLPVTIMSELVFHSQPINDRPKQAWCWFGGKWKDAIKEVKQTIVKHPRYTGTNNTDKINLTAPGGGDPEVTFMWTNCRGEFLYCKMNWFLNWVEDKDVTTQRPKERHRKNYVPCHIRQIINTWHKVGKNVYLPPREGDLTCNSTVTSLIANIDWTDGNQTSITMSAEVAELYRLELGDYKLVEITPIGLAPTDVKRYTTGGTSRNKRGVFVLGFLGFLATAGSAIGAVVVDVTAQSRTLLAGIVQQQQQLLDVVKRQQELLRLTVWGTKNLQTKVTAIEKYLKDQAQLNAWGCAFRQVCHITVPWPNASLTPDWNNDTWQEWERKVDFLEENITALLEEAQIQQEKNMYKLQKLNSWDVFGNWFDLASWIKYIQYGIYVVVGVILLRIVIYIVQMLAKLRQGYRPVFSSPPSYFQXTHTQQDPALPTREGKEGDGGEGGGNSSWPWQIEYIHFLIRQLIRLLTWLFSNCRTLLSRAYQILQPILQRLSATLRRIREVLRTELTYLQYGWSYFHEAVQAGWRSATETLAGAWGDLWETLRRGGRWILAIPRRIRQGLELTLL.

Positions 1–22 (MGCLKNQLLIAILLLSVYGIYC) are cleaved as a signal peptide. Over 23 to 696 (TQYVTVFYGV…ASWIKYIQYG (674 aa)) the chain is Extracellular. Asn37 carries N-linked (GlcNAc...) asparagine; by host glycosylation. A disulfide bridge connects residues Cys44 and Cys57. N-linked (GlcNAc...) asparagine; by host glycosylation is found at Asn70, Asn114, Asn148, Asn158, Asn173, Asn186, Asn200, Asn204, Asn214, Asn246, Asn249, Asn280, Asn286, Asn297, Asn308, Asn318, Asn373, and Asn379. 5 disulfide bridges follow: Cys101–Cys222, Cys108–Cys213, Cys113–Cys170, Cys235–Cys265, and Cys245–Cys257. Residues 113 to 169 (CNKSETDRWGLTKSSTTITTAAPTSAPVSEKLDMVNETSSCIAQNNCTGLEQEQMIS) are V1. Residues 170-213 (CKFNMTGLKRDKTKEYNETWYSTDLVCEQRNSTDNESRCYMNHC) form a V2 region. Positions 313-345 (CRRPGNKTVLPVTIMSELVFHSQPINDRPKQAW) are V3. Cys313 and Cys346 form a disulfide bridge. 2 disulfide bridges follow: Cys397-Cys461 and Cys404-Cys434. The segment at 404–434 (CKMNWFLNWVEDKDVTTQRPKERHRKNYVPC) is V4. 2 N-linked (GlcNAc...) asparagine; by host glycosylation sites follow: Asn462 and Asn478. Residues 477–484 (GNQTSITM) form a V5 region. Positions 528–548 (GVFVLGFLGFLATAGSAIGAV) are fusion peptide. The immunosuppression stretch occupies residues 591 to 607 (LQTKVTAIEKYLKDQAQ). N-linked (GlcNAc...) asparagine; by host glycosylation is found at Asn627, Asn636, and Asn652. The stretch at 636-668 (NDTWQEWERKVDFLEENITALLEEAQIQQEKNM) forms a coiled coil. The segment at 673–694 (KLNSWDVFGNWFDLASWIKYIQ) is MPER; binding to GalCer. Residues 697 to 717 (IYVVVGVILLRIVIYIVQMLA) form a helical membrane-spanning segment. The Cytoplasmic portion of the chain corresponds to 718-881 (KLRQGYRPVF…IRQGLELTLL (164 aa)). The YXXV motif; contains endocytosis signal signature appears at 723-726 (YRPV). The segment at 737–761 (THTQQDPALPTREGKEGDGGEGGGN) is disordered. Residue Cys789 is the site of S-palmitoyl cysteine; by host attachment. A Di-leucine internalization motif motif is present at residues 880–881 (LL).

The mature envelope protein (Env) consists of a homotrimer of non-covalently associated gp120-gp41 heterodimers. The resulting complex protrudes from the virus surface as a spike. Interacts with host CD4 and CCR5. Gp120 also interacts with the C-type lectins CD209/DC-SIGN and CLEC4M/DC-SIGNR (collectively referred to as DC-SIGN(R)). In terms of assembly, the mature envelope protein (Env) consists of a homotrimer of non-covalently associated gp120-gp41 heterodimers. The resulting complex protrudes from the virus surface as a spike. Post-translationally, specific enzymatic cleavages in vivo yield mature proteins. Envelope glycoproteins are synthesized as an inactive precursor that is heavily N-glycosylated and processed likely by host cell furin in the Golgi to yield the mature SU and TM proteins. The cleavage site between SU and TM requires the minimal sequence [KR]-X-[KR]-R. Palmitoylation of the transmembrane protein and of Env polyprotein (prior to its proteolytic cleavage) is essential for their association with host cell membrane lipid rafts. Palmitoylation is therefore required for envelope trafficking to classical lipid rafts, but not for viral replication.

Its subcellular location is the virion membrane. It is found in the host cell membrane. The protein resides in the host endosome membrane. In terms of biological role, the surface protein gp120 (SU) attaches the virus to the host lymphoid cell by binding to the primary receptor CD4. This interaction induces a structural rearrangement creating a high affinity binding site for a chemokine coreceptor like CCR5. This peculiar 2 stage receptor-interaction strategy allows gp120 to maintain the highly conserved coreceptor-binding site in a cryptic conformation, protected from neutralizing antibodies. These changes are transmitted to the transmembrane protein gp41 and are thought to activate its fusogenic potential by unmasking its fusion peptide. Functionally, surface protein gp120 (SU) may target the virus to gut-associated lymphoid tissue (GALT) by binding host ITGA4/ITGB7 (alpha-4/beta-7 integrins), a complex that mediates T-cell migration to the GALT. Interaction between gp120 and ITGA4/ITGB7 would allow the virus to enter GALT early in the infection, infecting and killing most of GALT's resting CD4+ T-cells. This T-cell depletion is believed to be the major insult to the host immune system leading to AIDS. Its function is as follows. The surface protein gp120 is a ligand for CD209/DC-SIGN and CLEC4M/DC-SIGNR, which are respectively found on dendritic cells (DCs), and on endothelial cells of liver sinusoids and lymph node sinuses. These interactions allow capture of viral particles at mucosal surfaces by these cells and subsequent transmission to permissive cells. DCs are professional antigen presenting cells, critical for host immunity by inducing specific immune responses against a broad variety of pathogens. They act as sentinels in various tissues where they take up antigen, process it, and present it to T-cells following migration to lymphoid organs. SIV subverts the migration properties of dendritic cells to gain access to CD4+ T-cells in lymph nodes. Virus transmission to permissive T-cells occurs either in trans (without DCs infection, through viral capture and transmission), or in cis (following DCs productive infection, through the usual CD4-gp120 interaction), thereby inducing a robust infection. In trans infection, bound virions remain infectious over days and it is proposed that they are not degraded, but protected in non-lysosomal acidic organelles within the DCs close to the cell membrane thus contributing to the viral infectious potential during DCs' migration from the periphery to the lymphoid tissues. On arrival at lymphoid tissues, intact virions recycle back to DCs' cell surface allowing virus transmission to CD4+ T-cells. Virion capture also seems to lead to MHC-II-restricted viral antigen presentation, and probably to the activation of SIV-specific CD4+ cells. The transmembrane protein gp41 (TM) acts as a class I viral fusion protein. Under the current model, the protein has at least 3 conformational states: pre-fusion native state, pre-hairpin intermediate state, and post-fusion hairpin state. During fusion of viral and target intracellular membranes, the coiled coil regions (heptad repeats) assume a trimer-of-hairpins structure, positioning the fusion peptide in close proximity to the C-terminal region of the ectodomain. The formation of this structure appears to drive apposition and subsequent fusion of viral and target cell membranes. Complete fusion occurs in host cell endosomes. The virus undergoes clathrin-dependent internalization long before endosomal fusion, thus minimizing the surface exposure of conserved viral epitopes during fusion and reducing the efficacy of inhibitors targeting these epitopes. Membranes fusion leads to delivery of the nucleocapsid into the cytoplasm. In terms of biological role, the envelope glycoprotein gp160 precursor down-modulates cell surface CD4 antigen by interacting with it in the endoplasmic reticulum and blocking its transport to the cell surface. Functionally, the gp120-gp41 heterodimer allows rapid transcytosis of the virus through CD4 negative cells such as simple epithelial monolayers of the intestinal, rectal and endocervical epithelial barriers. Both gp120 and gp41 specifically recognize glycosphingolipids galactosyl-ceramide (GalCer) or 3' sulfo-galactosyl-ceramide (GalS) present in the lipid rafts structures of epithelial cells. Binding to these alternative receptors allows the rapid transcytosis of the virus through the epithelial cells. This transcytotic vesicle-mediated transport of virions from the apical side to the basolateral side of the epithelial cells does not involve infection of the cells themselves. The sequence is that of Envelope glycoprotein gp160 (env) from Simian immunodeficiency virus (isolate K78) (SIV-mac).